Consider the following 91-residue polypeptide: Large ribosomal subunit protein bL31B (91 aa).

It belongs to the bacterial ribosomal protein bL31 family. Type B subfamily. Part of the 50S ribosomal subunit.

This chain is Large ribosomal subunit protein bL31B, found in Neisseria meningitidis serogroup B (strain ATCC BAA-335 / MC58).